A 356-amino-acid chain; its full sequence is Histidinol-phosphate aminotransferase (356 aa).

Lys214 is modified (N6-(pyridoxal phosphate)lysine).

Belongs to the class-II pyridoxal-phosphate-dependent aminotransferase family. Histidinol-phosphate aminotransferase subfamily. As to quaternary structure, homodimer. The cofactor is pyridoxal 5'-phosphate.

It carries out the reaction L-histidinol phosphate + 2-oxoglutarate = 3-(imidazol-4-yl)-2-oxopropyl phosphate + L-glutamate. It participates in amino-acid biosynthesis; L-histidine biosynthesis; L-histidine from 5-phospho-alpha-D-ribose 1-diphosphate: step 7/9. This Escherichia coli O7:K1 (strain IAI39 / ExPEC) protein is Histidinol-phosphate aminotransferase.